Here is a 152-residue protein sequence, read N- to C-terminus: MNSKVVIYTDGACAGNPGPGGWGALLKFNDASKEIFGYELDTTNNRMEITAAFEALKILKKSCNVEIYTDSKYLQQGITAWIHNWIKNNWCKSNNEPVKNADLWQKLYAELSKHTIIWKWVKGHANNSGNIAADKLAVQGRETAIEVLKCRG.

Residues 1–142 (MNSKVVIYTD…ADKLAVQGRE (142 aa)) enclose the RNase H type-1 domain. Residues Asp10, Glu48, Asp70, and Asp134 each contribute to the Mg(2+) site.

It belongs to the RNase H family. Monomer. The cofactor is Mg(2+).

The protein resides in the cytoplasm. It catalyses the reaction Endonucleolytic cleavage to 5'-phosphomonoester.. In terms of biological role, endonuclease that specifically degrades the RNA of RNA-DNA hybrids. This is Ribonuclease H from Rickettsia akari (strain Hartford).